Here is a 275-residue protein sequence, read N- to C-terminus: MISPSTKLYGLIGYPLGHSISFYIHNAAFRALSIDALYLNIPIEPEFFSKAILGIKYLPIYGLNVTIPHKESIIEFLDEISEISNILGAVNTVYRENHKWKGDNTDFGGFLKTLEDLNLSSDFSCLILGAGGAARAVIYAVLEYGFKEVYLTNRTYERAEKIAVEVKKNKNFEIKVIPWEDREKISEKVILINTTSIGLDGKETPWNGDFKKLVFVYDIIYNPKETPLLKLAKENNVPYKNGLDMLIYQACLSWEKWFGFVGPFEVMKREAEKLL.

Shikimate is bound by residues serine 19–serine 21 and threonine 66. Lysine 70 acts as the Proton acceptor in catalysis. Glutamate 82 provides a ligand contact to NADP(+). The shikimate site is built by asparagine 91 and aspartate 106. Residues glycine 129–alanine 133, asparagine 153–arginine 158, and isoleucine 219 contribute to the NADP(+) site. Position 221 (tyrosine 221) interacts with shikimate. Glycine 242 is a binding site for NADP(+).

The protein belongs to the shikimate dehydrogenase family. In terms of assembly, homodimer.

The catalysed reaction is shikimate + NADP(+) = 3-dehydroshikimate + NADPH + H(+). The protein operates within metabolic intermediate biosynthesis; chorismate biosynthesis; chorismate from D-erythrose 4-phosphate and phosphoenolpyruvate: step 4/7. Functionally, involved in the biosynthesis of the chorismate, which leads to the biosynthesis of aromatic amino acids. Catalyzes the reversible NADPH linked reduction of 3-dehydroshikimate (DHSA) to yield shikimate (SA). The sequence is that of Shikimate dehydrogenase (NADP(+)) from Dictyoglomus turgidum (strain DSM 6724 / Z-1310).